The chain runs to 205 residues: Small ribosomal subunit protein uS4 (205 aa).

Residues 1 to 46 (MSKRASSKYKIDRRMGENIWGRPKSPVNRREYGPGQHGQRRKGKLS) form a disordered region. Residues 94–154 (SRLDAIVYRA…QKSKQLAIVL (61 aa)) enclose the S4 RNA-binding domain.

Belongs to the universal ribosomal protein uS4 family. Part of the 30S ribosomal subunit. Contacts protein S5. The interaction surface between S4 and S5 is involved in control of translational fidelity.

In terms of biological role, one of the primary rRNA binding proteins, it binds directly to 16S rRNA where it nucleates assembly of the body of the 30S subunit. With S5 and S12 plays an important role in translational accuracy. This Allorhizobium ampelinum (strain ATCC BAA-846 / DSM 112012 / S4) (Agrobacterium vitis (strain S4)) protein is Small ribosomal subunit protein uS4.